Reading from the N-terminus, the 198-residue chain is Putative mycofactocin biosynthesis transcriptional regulator MftR (198 aa).

In terms of domain architecture, HTH tetR-type spans 12–72 (STTPHHISDV…GDFSTHLAQL (61 aa)). The H-T-H motif DNA-binding region spans 35–54 (SVDDIARAAGIARRTLFRYY).

Its function is as follows. May regulate a gene cluster involved in mycofactocin expression. Mycofactocin is a conserved polypeptide that might serve as an electron carrier. The protein is Putative mycofactocin biosynthesis transcriptional regulator MftR (mftR) of Mycobacterium tuberculosis (strain ATCC 25618 / H37Rv).